A 190-amino-acid polypeptide reads, in one-letter code: Somatotropin (190 aa).

Zn(2+) is bound at residue His19. Cys52 and Cys163 are joined by a disulfide. Ser105 is subject to Phosphoserine. Glu172 contributes to the Zn(2+) binding site. Cys180 and Cys188 are joined by a disulfide.

It belongs to the somatotropin/prolactin family.

It localises to the secreted. In terms of biological role, plays an important role in growth control. Its major role in stimulating body growth is to stimulate the liver and other tissues to secrete IGF1. It stimulates both the differentiation and proliferation of myoblasts. It also stimulates amino acid uptake and protein synthesis in muscle and other tissues. The polypeptide is Somatotropin (GH1) (Vulpes vulpes (Red fox)).